The following is a 505-amino-acid chain: Bifunctional pantoate ligase/cytidylate kinase (505 aa).

Residues 1–268 (MHQWRKHQQS…CGETRLIDHT (268 aa)) form a pantoate--beta-alanine ligase region. 18–25 (MGALHRGH) provides a ligand contact to ATP. H25 (proton donor) is an active-site residue. Q53 contributes to the (R)-pantoate binding site. Position 53 (Q53) interacts with beta-alanine. 142–145 (GEKD) serves as a coordination point for ATP. A (R)-pantoate-binding site is contributed by Q148. Residues V171 and 179–182 (CSSR) each bind ATP. The tract at residues 269-505 (FLMSRQPIVA…PEEVWPTAGR (237 aa)) is cytidylate kinase.

The protein in the N-terminal section; belongs to the pantothenate synthetase family. This sequence in the C-terminal section; belongs to the cytidylate kinase family. Type 1 subfamily.

The protein resides in the cytoplasm. It catalyses the reaction (R)-pantoate + beta-alanine + ATP = (R)-pantothenate + AMP + diphosphate + H(+). The enzyme catalyses CMP + ATP = CDP + ADP. The catalysed reaction is dCMP + ATP = dCDP + ADP. Its pathway is cofactor biosynthesis; (R)-pantothenate biosynthesis; (R)-pantothenate from (R)-pantoate and beta-alanine: step 1/1. In terms of biological role, catalyzes the condensation of pantoate with beta-alanine in an ATP-dependent reaction via a pantoyl-adenylate intermediate. Its function is as follows. Catalyzes the transfer of a phosphate group from ATP to either CMP or dCMP to form CDP or dCDP and ADP, respectively. The protein is Bifunctional pantoate ligase/cytidylate kinase of Prochlorococcus marinus (strain MIT 9313).